A 134-amino-acid polypeptide reads, in one-letter code: Profilin-4 (134 aa).

An intrachain disulfide couples cysteine 13 to cysteine 118. Residues 84 to 100 carry the Involved in PIP2 interaction motif; the sequence is AVIRGKKGSGGITIKKT. Threonine 114 carries the post-translational modification Phosphothreonine.

This sequence belongs to the profilin family. In terms of assembly, occurs in many kinds of cells as a complex with monomeric actin in a 1:1 ratio. Phosphorylated by MAP kinases.

It localises to the cytoplasm. Its subcellular location is the cytoskeleton. Functionally, binds to actin and affects the structure of the cytoskeleton. At high concentrations, profilin prevents the polymerization of actin, whereas it enhances it at low concentrations. The polypeptide is Profilin-4 (Olea europaea (Common olive)).